The following is a 428-amino-acid chain: MGNCHTVGPNEALVVSGGCCGSDYKQYVFGGWAWAWWCISDTQRISLEIMTLQPRCEDVETAEGVALTVTGVAQVKIMTEKELLAVACEQFLGKNVQDIKNVVLQTLEGHLRSILGTLTVEQIYQDRDQFAKLVREVAAPDVGRMGIEILSFTIKDVYDKVDYLSSLGKTQTAVVQRDADIGVAEAERDAGIREAECKKEMLDVKFMADTKIADSKRAFELQKSAFSEEVNIKTAEAQLAYELQGAREQQKIRQEEIEIEVVQRKKQIAVEAQEILRTDKELIATVRRPAEAEAHRIQQIAEGEKVKQVLLAQAEAEKIRKIGEAEAAVIEAMGKAEAERMKLKAEAYQKYGDAAKMALVLEALPQIAAKIAAPLTKVDEIVVLSGDNSKVTSEVNRLLAELPASVHALTGVDLSKIPLIKKATGVQV.

G2 is lipidated: N-myristoyl glycine. A lipid anchor (S-palmitoyl cysteine; by ZDHHC5) is attached at C4. Residue C19 is the site of S-palmitoyl cysteine attachment. The S-palmitoyl cysteine; by ZDHHC5 moiety is linked to residue C20. Residue S405 is modified to Phosphoserine.

The protein belongs to the band 7/mec-2 family. Flotillin subfamily. As to quaternary structure, heterooligomeric complex of flotillin-1 and flotillin-2 and caveolin-1 and caveolin-2. Interacts with ECPAS. Post-translationally, ZDHHC5-catalyzed palmitoylation predominantly occurs at Cys-4. ZDHHC5-catalyzed palmitoylation may be required for the formation of higher-order complexes and for neurite outgrowth in cultured neural stem cells. In skin, expressed in epidermis and epidermal appendages but not in dermis. Expressed in all layers of the epidermis except the basal layer. In hair follicles, expressed in the suprabasal layer but not the basal layer. Also expressed in melanoma and carcinoma cell lines, fibroblasts and foreskin melanocytes.

The protein localises to the cell membrane. The protein resides in the membrane. It localises to the caveola. It is found in the endosome. May act as a scaffolding protein within caveolar membranes, functionally participating in formation of caveolae or caveolae-like vesicles. May be involved in epidermal cell adhesion and epidermal structure and function. The polypeptide is Flotillin-2 (FLOT2) (Homo sapiens (Human)).